Consider the following 220-residue polypeptide: 7-cyano-7-deazaguanine synthase (220 aa).

An ATP-binding site is contributed by 10-20 (FSGGQDSTTCL). 4 residues coordinate Zn(2+): C186, C195, C198, and C201.

The protein belongs to the QueC family. As to quaternary structure, homodimer. Requires Zn(2+) as cofactor.

It carries out the reaction 7-carboxy-7-deazaguanine + NH4(+) + ATP = 7-cyano-7-deazaguanine + ADP + phosphate + H2O + H(+). It functions in the pathway purine metabolism; 7-cyano-7-deazaguanine biosynthesis. Catalyzes the ATP-dependent conversion of 7-carboxy-7-deazaguanine (CDG) to 7-cyano-7-deazaguanine (preQ(0)). The protein is 7-cyano-7-deazaguanine synthase of Bacillus cereus (strain AH187).